Consider the following 258-residue polypeptide: Large ribosomal subunit protein eL8z (258 aa).

Residues 1–20 are disordered; it reads MAPKRGGRAPVPAKKKTEKV.

The protein belongs to the eukaryotic ribosomal protein eL8 family.

In Oryza sativa subsp. japonica (Rice), this protein is Large ribosomal subunit protein eL8z (RPL7A-1).